Reading from the N-terminus, the 234-residue chain is Large ribosomal subunit protein uL1 (234 aa).

It belongs to the universal ribosomal protein uL1 family. In terms of assembly, part of the 50S ribosomal subunit.

Binds directly to 23S rRNA. The L1 stalk is quite mobile in the ribosome, and is involved in E site tRNA release. In terms of biological role, protein L1 is also a translational repressor protein, it controls the translation of the L11 operon by binding to its mRNA. This is Large ribosomal subunit protein uL1 from Bartonella tribocorum (strain CIP 105476 / IBS 506).